The primary structure comprises 561 residues: Type 2 DNA topoisomerase 6 subunit B (561 aa).

ATP contacts are provided by residues Asn46, Asp78, 99–100 (TK), 109–116 (GQQGIGIS), and Lys471.

The protein belongs to the TOP6B family. Homodimer. Heterotetramer of two Top6A and two Top6B chains.

The enzyme catalyses ATP-dependent breakage, passage and rejoining of double-stranded DNA.. Its function is as follows. Relaxes both positive and negative superturns and exhibits a strong decatenase activity. The sequence is that of Type 2 DNA topoisomerase 6 subunit B from Thermococcus gammatolerans (strain DSM 15229 / JCM 11827 / EJ3).